The sequence spans 215 residues: uncharacterized protein (215 aa).

A run of 5 helical transmembrane segments spans residues 1–21 (MTAEFIIRLILAAIACGAIGM), 36–56 (VLIGMGSALFMIVSKYGFADV), 67–87 (SRIAAQVVTGVGFIGAGNILV), 92–112 (IVGLTTAADIWVTAAIGMVIG), and 118–138 (LGIYGSVMTLLVLEVFHQLTF).

Belongs to the MgtC/SapB family.

The protein resides in the cell inner membrane. This is an uncharacterized protein from Escherichia coli O157:H7.